Here is a 193-residue protein sequence, read N- to C-terminus: Cell wall galactomannoprotein (193 aa).

An N-terminal signal peptide occupies residues 1–17; sequence MFFRILALLPLVFLVTA. N-linked (GlcNAc...) asparagine glycosylation is found at Asn-38 and Asn-173.

The protein belongs to the cell wall mannoprotein 1 family. Galactomannoprotein, glycosylated.

It localises to the secreted. Its subcellular location is the cell wall. In terms of biological role, constitutive protein of the cell wall. The polypeptide is Cell wall galactomannoprotein (Armillaria ostoyae (Armillaria root rot fungus)).